A 355-amino-acid chain; its full sequence is Glutamine synthetase root isozyme 4 (355 aa).

A GS beta-grasp domain is found at 19–99; that stretch reads IIAEYIWIGG…VMCDCYTPAG (81 aa). The segment at 37–66 is disordered; it reads ARTLPGPVTDPSKLPKWNYDGSSTGQAPGE. One can recognise a GS catalytic domain in the interval 106–355; the sequence is KRYSAAKIFS…IAETTIVWKP (250 aa).

The protein belongs to the glutamine synthetase family. As to quaternary structure, homooctamer. As to expression, found in all the tissues examined with higher expression found in tissues of the root, stem and seedling shoot.

The protein localises to the cytoplasm. It catalyses the reaction L-glutamate + NH4(+) + ATP = L-glutamine + ADP + phosphate + H(+). Plays a role in the flow of nitrogen into nitrogenous organic compounds. This is Glutamine synthetase root isozyme 4 (GLN5) from Zea mays (Maize).